Reading from the N-terminus, the 257-residue chain is Homeobox protein goosecoid (257 aa).

Residues 160 to 219 (KRRHRTIFTDEQLEALENLFQETKYPDVGTREQLARKVHLREEKVEVWFKNRRAKWRRQK) constitute a DNA-binding region (homeobox). The tract at residues 213 to 257 (AKWRRQKRSSSEESENAEKWNKTSSSKASPEKREEEGKSDLDSDS) is disordered. Positions 241 to 257 (SPEKREEEGKSDLDSDS) are enriched in basic and acidic residues.

The protein belongs to the paired homeobox family. Bicoid subfamily.

It localises to the nucleus. Regulates chordin (CHRD). May play a role in spatial programing within discrete embryonic fields or lineage compartments during organogenesis. In concert with NKX3-2, plays a role in defining the structural components of the middle ear; required for the development of the entire tympanic ring. Probably involved in the regulatory networks that define neural crest cell fate specification and determine mesoderm cell lineages in mammals. In Gorilla gorilla gorilla (Western lowland gorilla), this protein is Homeobox protein goosecoid (GSC).